We begin with the raw amino-acid sequence, 432 residues long: Adenylosuccinate synthetase (432 aa).

GTP-binding positions include 13–19 and 41–43; these read GDEGKGK and GHT. Catalysis depends on Asp14, which acts as the Proton acceptor. Asp14 and Gly41 together coordinate Mg(2+). IMP-binding positions include 14–17, 39–42, Thr130, Arg144, Gln225, Thr240, and Arg304; these read DEGK and NAGH. His42 serves as the catalytic Proton donor. Residue 300–306 coordinates substrate; that stretch reads STTGRPR. GTP is bound by residues Arg306, 332-334, and 416-418; these read KLD and STG.

It belongs to the adenylosuccinate synthetase family. In terms of assembly, homodimer. Mg(2+) is required as a cofactor.

It localises to the cytoplasm. It carries out the reaction IMP + L-aspartate + GTP = N(6)-(1,2-dicarboxyethyl)-AMP + GDP + phosphate + 2 H(+). It functions in the pathway purine metabolism; AMP biosynthesis via de novo pathway; AMP from IMP: step 1/2. Plays an important role in the de novo pathway of purine nucleotide biosynthesis. Catalyzes the first committed step in the biosynthesis of AMP from IMP. This chain is Adenylosuccinate synthetase, found in Nitrosomonas europaea (strain ATCC 19718 / CIP 103999 / KCTC 2705 / NBRC 14298).